The sequence spans 477 residues: Putative multidrug resistance protein MdtD (477 aa).

The next 14 membrane-spanning stretches (helical) occupy residues 13-33, 50-70, 73-93, 107-127, 139-159, 166-186, 196-216, 220-240, 268-288, 291-311, 326-348, 352-374, 394-414, and 432-452; these read LWIV…VNTA, SVIV…GWLA, VGVQ…SILC, VVQG…VMKI, FVTL…GFLV, WIFL…LLLM, FDIS…LALD, GMGL…AALA, LTAS…TPLF, VGMG…IIGS, GYRN…FPLV, GWIW…RFSA, LLSM…GILI, and AFIY…LAFA.

This sequence belongs to the major facilitator superfamily. TCR/Tet family.

It localises to the cell inner membrane. This is Putative multidrug resistance protein MdtD from Serratia proteamaculans (strain 568).